Consider the following 546-residue polypeptide: Glutathione synthetase, chloroplastic (546 aa).

The transit peptide at 1-63 (MGSGCSSPSI…SPLKCAKVPE (63 aa)) directs the protein to the chloroplast. A substrate-binding site is contributed by Arg-200. Glu-216 contributes to the ATP binding site. Positions 216 and 218 each coordinate Mg(2+). Residues 220 to 223 (ISSS), 288 to 290 (ERN), Gln-294, and 342 to 345 (RAGY) contribute to the substrate site. ATP-binding positions include Lys-381, 435–444 (KPQREGGGNN), Tyr-446, 471–474 (MQRI), and Glu-497. Residue Glu-439 participates in Mg(2+) binding. Arg-522 contacts substrate. 2 residues coordinate ATP: Lys-524 and Glu-530. Position 533–534 (533–534 (VA)) interacts with substrate.

This sequence belongs to the eukaryotic GSH synthase family. Homodimer. Mg(2+) serves as cofactor.

The protein resides in the plastid. Its subcellular location is the chloroplast. The enzyme catalyses gamma-L-glutamyl-L-cysteine + glycine + ATP = glutathione + ADP + phosphate + H(+). It participates in sulfur metabolism; glutathione biosynthesis; glutathione from L-cysteine and L-glutamate: step 2/2. This Solanum lycopersicum (Tomato) protein is Glutathione synthetase, chloroplastic (GSH2).